We begin with the raw amino-acid sequence, 396 residues long: Elongation factor Tu (396 aa).

Positions 10–206 (KPHINVGTIG…QMDAYIPEPQ (197 aa)) constitute a tr-type G domain. The G1 stretch occupies residues 19 to 26 (GHVDHGKT). 19-26 (GHVDHGKT) lines the GTP pocket. Position 26 (T26) interacts with Mg(2+). Residues 60–64 (GITIA) form a G2 region. A G3 region spans residues 81-84 (DCPG). Residues 81-85 (DCPGH) and 136-139 (NKAD) each bind GTP. The interval 136–139 (NKAD) is G4. Positions 174–176 (SAL) are G5.

Belongs to the TRAFAC class translation factor GTPase superfamily. Classic translation factor GTPase family. EF-Tu/EF-1A subfamily. In terms of assembly, monomer.

The protein localises to the cytoplasm. The enzyme catalyses GTP + H2O = GDP + phosphate + H(+). Its function is as follows. GTP hydrolase that promotes the GTP-dependent binding of aminoacyl-tRNA to the A-site of ribosomes during protein biosynthesis. This Nitrosococcus oceani (strain ATCC 19707 / BCRC 17464 / JCM 30415 / NCIMB 11848 / C-107) protein is Elongation factor Tu.